Consider the following 717-residue polypeptide: Ribosomal RNA large subunit methyltransferase K/L (717 aa).

One can recognise a THUMP domain in the interval 44–155; it reads DAYKVCIYSY…KQFVNVFLCL (112 aa).

It belongs to the methyltransferase superfamily. RlmKL family.

It localises to the cytoplasm. It carries out the reaction guanosine(2445) in 23S rRNA + S-adenosyl-L-methionine = N(2)-methylguanosine(2445) in 23S rRNA + S-adenosyl-L-homocysteine + H(+). The catalysed reaction is guanosine(2069) in 23S rRNA + S-adenosyl-L-methionine = N(2)-methylguanosine(2069) in 23S rRNA + S-adenosyl-L-homocysteine + H(+). Its function is as follows. Specifically methylates the guanine in position 2445 (m2G2445) and the guanine in position 2069 (m7G2069) of 23S rRNA. This chain is Ribosomal RNA large subunit methyltransferase K/L, found in Francisella tularensis subsp. tularensis (strain SCHU S4 / Schu 4).